The sequence spans 279 residues: 3-methyl-2-oxobutanoate hydroxymethyltransferase (279 aa).

Mg(2+) contacts are provided by D44 and D83. 3-methyl-2-oxobutanoate-binding positions include 44–45, D83, and K113; that span reads DS. E115 serves as a coordination point for Mg(2+). E182 (proton acceptor) is an active-site residue.

It belongs to the PanB family. In terms of assembly, homodecamer; pentamer of dimers. Mg(2+) is required as a cofactor.

The protein localises to the cytoplasm. The enzyme catalyses 3-methyl-2-oxobutanoate + (6R)-5,10-methylene-5,6,7,8-tetrahydrofolate + H2O = 2-dehydropantoate + (6S)-5,6,7,8-tetrahydrofolate. The protein operates within cofactor biosynthesis; (R)-pantothenate biosynthesis; (R)-pantoate from 3-methyl-2-oxobutanoate: step 1/2. Functionally, catalyzes the reversible reaction in which hydroxymethyl group from 5,10-methylenetetrahydrofolate is transferred onto alpha-ketoisovalerate to form ketopantoate. The chain is 3-methyl-2-oxobutanoate hydroxymethyltransferase from Dehalococcoides mccartyi (strain CBDB1).